We begin with the raw amino-acid sequence, 354 residues long: Uroporphyrinogen decarboxylase (354 aa).

Residues 27–31 (RQAGR), aspartate 77, tyrosine 153, threonine 208, and histidine 326 each bind substrate.

The protein belongs to the uroporphyrinogen decarboxylase family. Homodimer.

The protein localises to the cytoplasm. The catalysed reaction is uroporphyrinogen III + 4 H(+) = coproporphyrinogen III + 4 CO2. It functions in the pathway porphyrin-containing compound metabolism; protoporphyrin-IX biosynthesis; coproporphyrinogen-III from 5-aminolevulinate: step 4/4. Its function is as follows. Catalyzes the decarboxylation of four acetate groups of uroporphyrinogen-III to yield coproporphyrinogen-III. The sequence is that of Uroporphyrinogen decarboxylase from Neisseria gonorrhoeae (strain NCCP11945).